A 151-amino-acid polypeptide reads, in one-letter code: Ribonuclease H (151 aa).

Residues 1-143 (MEEYVIYTDG…VDRVARKEAA (143 aa)) form the RNase H type-1 domain. The Mg(2+) site is built by Asp-9, Glu-48, Asp-71, and Asp-135.

Belongs to the RNase H family. In terms of assembly, monomer. Mg(2+) is required as a cofactor.

Its subcellular location is the cytoplasm. The catalysed reaction is Endonucleolytic cleavage to 5'-phosphomonoester.. Endonuclease that specifically degrades the RNA of RNA-DNA hybrids. The polypeptide is Ribonuclease H (Neorickettsia sennetsu (strain ATCC VR-367 / Miyayama) (Ehrlichia sennetsu)).